The following is a 594-amino-acid chain: Proline--tRNA ligase (594 aa).

This sequence belongs to the class-II aminoacyl-tRNA synthetase family. ProS type 1 subfamily. In terms of assembly, homodimer.

It localises to the cytoplasm. It carries out the reaction tRNA(Pro) + L-proline + ATP = L-prolyl-tRNA(Pro) + AMP + diphosphate. Functionally, catalyzes the attachment of proline to tRNA(Pro) in a two-step reaction: proline is first activated by ATP to form Pro-AMP and then transferred to the acceptor end of tRNA(Pro). As ProRS can inadvertently accommodate and process non-cognate amino acids such as alanine and cysteine, to avoid such errors it has two additional distinct editing activities against alanine. One activity is designated as 'pretransfer' editing and involves the tRNA(Pro)-independent hydrolysis of activated Ala-AMP. The other activity is designated 'posttransfer' editing and involves deacylation of mischarged Ala-tRNA(Pro). The misacylated Cys-tRNA(Pro) is not edited by ProRS. The sequence is that of Proline--tRNA ligase from Synechococcus sp. (strain WH7803).